A 364-amino-acid polypeptide reads, in one-letter code: Mannose-1-phosphate guanylyltransferase catalytic subunit beta (364 aa).

The segment at 2–220 (KALILVGGYG…PGFWMDVGQP (219 aa)) is substrate-binding domain. D109 serves as a coordination point for GDP-alpha-D-mannose. D109 is a binding site for Mg(2+). The active site involves K160. Residue D216 participates in GDP-alpha-D-mannose binding. Residue D216 coordinates Mg(2+). The segment at 243–364 (ATGSNIHGTA…VNVPSKDIIM (122 aa)) is hexapeptide repeat domain.

Belongs to the transferase hexapeptide repeat family. In terms of assembly, component of the GMPPA-GMPPB mannose-1-phosphate guanylyltransferase complex composed of 4 GMPPA subunits and 8 tag-335/GMPPB subunits; the complex is organized into three layers, a central layer made up of 2 GMPPA dimers sandwiched between two layers each made up of 2 tag-335/GMPPB dimers. Catalytic activity of tag-335/GMPPB is reduced when part of the complex and binding of GDP-alpha-D-Mannose by GMPPA induces allosteric feedback inhibition of tag-335/GMPPB. Mg(2+) serves as cofactor.

The catalysed reaction is alpha-D-mannose 1-phosphate + GTP + H(+) = GDP-alpha-D-mannose + diphosphate. It participates in nucleotide-sugar biosynthesis; GDP-alpha-D-mannose biosynthesis; GDP-alpha-D-mannose from alpha-D-mannose 1-phosphate (GTP route): step 1/1. Enzyme activity is reduced by incorporation into the GMPPA-GMPPB mannose-1-phosphate guanylyltransferase complex. Allosterically inhibited, when part of the GMPPA-GMPPB complex, by GDP-alpha-D-mannose binding to GMPPA. Functionally, catalytic subunit of the GMPPA-GMPPB mannose-1-phosphate guanylyltransferase complex. Catalyzes the formation of GDP-mannose, an essential precursor of glycan moieties of glycoproteins and glycolipids. Can catalyze the reverse reaction in vitro. Together with GMPPA regulates GDP-alpha-D-mannose levels. The chain is Mannose-1-phosphate guanylyltransferase catalytic subunit beta from Caenorhabditis briggsae.